The following is a 385-amino-acid chain: 8-amino-7-oxononanoate synthase (385 aa).

Arg21 is a substrate binding site. Position 108-109 (108-109 (GY)) interacts with pyridoxal 5'-phosphate. His133 serves as a coordination point for substrate. Pyridoxal 5'-phosphate contacts are provided by Ser179, His207, and Thr233. N6-(pyridoxal phosphate)lysine is present on Lys236. Residue Thr350 coordinates substrate.

Belongs to the class-II pyridoxal-phosphate-dependent aminotransferase family. BioF subfamily. In terms of assembly, homodimer. Pyridoxal 5'-phosphate serves as cofactor.

It carries out the reaction 6-carboxyhexanoyl-[ACP] + L-alanine + H(+) = (8S)-8-amino-7-oxononanoate + holo-[ACP] + CO2. Its pathway is cofactor biosynthesis; biotin biosynthesis. Functionally, catalyzes the decarboxylative condensation of pimeloyl-[acyl-carrier protein] and L-alanine to produce 8-amino-7-oxononanoate (AON), [acyl-carrier protein], and carbon dioxide. This is 8-amino-7-oxononanoate synthase from Pectobacterium atrosepticum (strain SCRI 1043 / ATCC BAA-672) (Erwinia carotovora subsp. atroseptica).